The chain runs to 478 residues: Ribosomal RNA small subunit methyltransferase F (478 aa).

Residues 125 to 131 (AAAPGSK), Glu-149, Asp-176, and Asp-194 each bind S-adenosyl-L-methionine. Cys-247 serves as the catalytic Nucleophile.

This sequence belongs to the class I-like SAM-binding methyltransferase superfamily. RsmB/NOP family.

The protein resides in the cytoplasm. The enzyme catalyses cytidine(1407) in 16S rRNA + S-adenosyl-L-methionine = 5-methylcytidine(1407) in 16S rRNA + S-adenosyl-L-homocysteine + H(+). Functionally, specifically methylates the cytosine at position 1407 (m5C1407) of 16S rRNA. This is Ribosomal RNA small subunit methyltransferase F from Serratia proteamaculans (strain 568).